The chain runs to 261 residues: DNA repair protein RecO (261 aa).

It belongs to the RecO family.

In terms of biological role, involved in DNA repair and RecF pathway recombination. In Pelodictyon phaeoclathratiforme (strain DSM 5477 / BU-1), this protein is DNA repair protein RecO.